The following is a 517-amino-acid chain: GMP synthase [glutamine-hydrolyzing] (517 aa).

One can recognise a Glutamine amidotransferase type-1 domain in the interval 9–199; sequence RILILDFGSQ…VLGICGCERL (191 aa). The active-site Nucleophile is the C86. Active-site residues include H173 and E175. The GMPS ATP-PPase domain occupies 200-392; sequence WTSESIIEDA…LGLPYEMLYR (193 aa). 227 to 233 provides a ligand contact to ATP; that stretch reads SGGVDSS.

In terms of assembly, homodimer.

The catalysed reaction is XMP + L-glutamine + ATP + H2O = GMP + L-glutamate + AMP + diphosphate + 2 H(+). The protein operates within purine metabolism; GMP biosynthesis; GMP from XMP (L-Gln route): step 1/1. In terms of biological role, catalyzes the synthesis of GMP from XMP. This chain is GMP synthase [glutamine-hydrolyzing], found in Vibrio vulnificus (strain CMCP6).